We begin with the raw amino-acid sequence, 300 residues long: D-alanine--D-alanine ligase (300 aa).

The ATP-grasp domain maps to 99-293 (KKILKYANIN…FAELLNSIVK (195 aa)). 126 to 181 (IEKIGYPVFVKPNSGGSSVATNLVKDGDGIKEAVELALKYDKEVMIENYTKGEEIT) contacts ATP. D248, E260, and N262 together coordinate Mg(2+).

This sequence belongs to the D-alanine--D-alanine ligase family. Mg(2+) is required as a cofactor. Mn(2+) serves as cofactor.

It is found in the cytoplasm. The catalysed reaction is 2 D-alanine + ATP = D-alanyl-D-alanine + ADP + phosphate + H(+). Its pathway is cell wall biogenesis; peptidoglycan biosynthesis. Its function is as follows. Cell wall formation. The protein is D-alanine--D-alanine ligase of Clostridium botulinum (strain 657 / Type Ba4).